Reading from the N-terminus, the 195-residue chain is Peptidyl-tRNA hydrolase (195 aa).

Y17 serves as a coordination point for tRNA. The active-site Proton acceptor is H22. TRNA-binding residues include Y68, N70, and N116.

This sequence belongs to the PTH family. In terms of assembly, monomer.

It localises to the cytoplasm. It catalyses the reaction an N-acyl-L-alpha-aminoacyl-tRNA + H2O = an N-acyl-L-amino acid + a tRNA + H(+). In terms of biological role, hydrolyzes ribosome-free peptidyl-tRNAs (with 1 or more amino acids incorporated), which drop off the ribosome during protein synthesis, or as a result of ribosome stalling. Its function is as follows. Catalyzes the release of premature peptidyl moieties from peptidyl-tRNA molecules trapped in stalled 50S ribosomal subunits, and thus maintains levels of free tRNAs and 50S ribosomes. This Shewanella putrefaciens (strain CN-32 / ATCC BAA-453) protein is Peptidyl-tRNA hydrolase.